Consider the following 226-residue polypeptide: ATP-dependent dethiobiotin synthetase BioD (226 aa).

12-17 (EVGKTV) lines the ATP pocket. Residue T16 coordinates Mg(2+). Residue K39 is part of the active site. T43 is a substrate binding site. Residues D47, 108-111 (EALG), 168-169 (NC), and 200-202 (PYI) contribute to the ATP site. Mg(2+) contacts are provided by D47 and E108.

It belongs to the dethiobiotin synthetase family. In terms of assembly, homodimer. Mg(2+) serves as cofactor.

The protein resides in the cytoplasm. The enzyme catalyses (7R,8S)-7,8-diammoniononanoate + CO2 + ATP = (4R,5S)-dethiobiotin + ADP + phosphate + 3 H(+). It carries out the reaction (7R,8S)-8-amino-7-(carboxyamino)nonanoate + ATP = (4R,5S)-dethiobiotin + ADP + phosphate + H(+). The protein operates within cofactor biosynthesis; biotin biosynthesis; biotin from 7,8-diaminononanoate: step 1/2. Functionally, catalyzes a mechanistically unusual reaction, the ATP-dependent insertion of CO2 between the N7 and N8 nitrogen atoms of 7,8-diaminopelargonic acid (DAPA, also called 7,8-diammoniononanoate) to form a ureido ring. This cyanobacterium does not encode bioA (which catalyzes the formation of the precursor for this reaction in the cannonical pathway), instead it encodes bioU, which replaces bioA and also performs the first half of the cannonical BioD reaction. Thus in this organism BioD has a different substrate. This Gloeothece citriformis (strain PCC 7424) (Cyanothece sp. (strain PCC 7424)) protein is ATP-dependent dethiobiotin synthetase BioD.